Consider the following 74-residue polypeptide: Cecropin-P2 (74 aa).

The signal sequence occupies residues Met1 to Ser13. The propeptide at Arg45 to Ile74 is removed in mature form.

It belongs to the cecropin family. In terms of tissue distribution, expressed in the body wall, intestine, uterus and ovary.

It localises to the secreted. Functionally, has antibacterial activity against several Gram-positive and Gram-negative bacteria. Is weakly active against yeasts. Acts by a nonpore mechanism. This Ascaris suum (Pig roundworm) protein is Cecropin-P2 (ASCEC-2).